A 117-amino-acid chain; its full sequence is Fluoride-specific ion channel FluC 2 (117 aa).

The next 2 membrane-spanning stretches (helical) occupy residues 1 to 21 and 46 to 66; these read MISIILVMIGGGLGAIARSAI and FLIGLTIGLSISISWFPAFFV. Residues G71 and T74 each contribute to the Na(+) site. A helical membrane pass occupies residues 95-115; sequence LFLNYSLLQFIIGFIACYIGY.

Belongs to the fluoride channel Fluc/FEX (TC 1.A.43) family.

It localises to the cell membrane. The enzyme catalyses fluoride(in) = fluoride(out). Na(+) is not transported, but it plays an essential structural role and its presence is essential for fluoride channel function. Fluoride-specific ion channel. Important for reducing fluoride concentration in the cell, thus reducing its toxicity. In Staphylococcus aureus (strain MRSA252), this protein is Fluoride-specific ion channel FluC 2.